Here is a 308-residue protein sequence, read N- to C-terminus: MRPRITFRPLHGILLLDKPAGLSSNNALQAARRLLRAEKGGHTGSLDPLATGLLPLCFGEATKIAGLLLGSAKAYDADIVLGVTTDTDDADGQPLRERPVPALSEAALQAALAPFIGRIQQQAPIYSALKQGGEPLYAKARRGEVIEAPVREVEVHAITLTSYASPRLRLRVTCGSGTYIRSLARDLGEALGCGAHIAALRRVWVEPFRTPEMITLEALTALVESGADAAQLLLPVAAGLSDFAQITLDATLVARFRMGQRLRDPAFPEGQVAVFDTDGSPAGLGLVDADGRLSPQRLFNGLNAAAAC.

Asp47 serves as the catalytic Nucleophile.

Belongs to the pseudouridine synthase TruB family. Type 1 subfamily.

The catalysed reaction is uridine(55) in tRNA = pseudouridine(55) in tRNA. Its function is as follows. Responsible for synthesis of pseudouridine from uracil-55 in the psi GC loop of transfer RNAs. The chain is tRNA pseudouridine synthase B from Xanthomonas campestris pv. campestris (strain B100).